A 204-amino-acid polypeptide reads, in one-letter code: Isochorismatase domain-containing protein 2 (204 aa).

The protein belongs to the isochorismatase family. As to quaternary structure, interacts with CDKN2A.

The protein resides in the cytoplasm. Its subcellular location is the nucleus. The polypeptide is Isochorismatase domain-containing protein 2 (ISOC2) (Bos taurus (Bovine)).